A 158-amino-acid polypeptide reads, in one-letter code: Small ribosomal subunit protein uS19 (158 aa).

The protein belongs to the universal ribosomal protein uS19 family.

In terms of biological role, protein S19 forms a complex with S13 that binds strongly to the 16S ribosomal RNA. This chain is Small ribosomal subunit protein uS19, found in Pyrobaculum neutrophilum (strain DSM 2338 / JCM 9278 / NBRC 100436 / V24Sta) (Thermoproteus neutrophilus).